The sequence spans 408 residues: Succinylornithine transaminase (408 aa).

At K252 the chain carries N6-(pyridoxal phosphate)lysine.

This sequence belongs to the class-III pyridoxal-phosphate-dependent aminotransferase family. AstC subfamily. Requires pyridoxal 5'-phosphate as cofactor.

The catalysed reaction is N(2)-succinyl-L-ornithine + 2-oxoglutarate = N-succinyl-L-glutamate 5-semialdehyde + L-glutamate. It functions in the pathway amino-acid degradation; L-arginine degradation via AST pathway; L-glutamate and succinate from L-arginine: step 3/5. Functionally, catalyzes the transamination of N(2)-succinylornithine and alpha-ketoglutarate into N(2)-succinylglutamate semialdehyde and glutamate. Can also act as an acetylornithine aminotransferase. This chain is Succinylornithine transaminase, found in Salmonella agona (strain SL483).